Consider the following 191-residue polypeptide: Programmed cell death protein 6 (191 aa).

Ala2 carries the post-translational modification N-acetylalanine. EF-hand domains lie at 23-58 (PDQSFLWNVFQRVDKDRSGVISDNELQQALSNGTWT), 59-89 (PFNPVTVRSIISMFDRENKAGVNFSEFTGVW), 90-125 (KYITDWQNVFRTYDRDNSGMIDKHELKQALSGFGYR), 126-161 (LSDQFHDILIRKFDRQGRGQIAFDDFIQGCIVLQRL), and 162-191 (TDIFRRYDTDQDGWIQVSYEQYLSMVFSIV). Asp36, Asp38, Ser40, Val42, and Glu47 together coordinate Ca(2+). Ca(2+) is bound by residues Asp103, Asp105, Ser107, Met109, and Glu114. Positions 169, 171, 173, and 175 each coordinate Mg(2+).

As to quaternary structure, homodimer and heterodimer; heterodimerizes (via the EF-hand 5) with PEF1. Isoform 1 and isoform 2 self-associate; probably forming homodimers. Interacts with CPNE4 (via VWFA domain). Interacts with PDCD6IP; the interaction is calcium-dependent. Interacts with RBM22. Interacts with PLSCR4. Interacts with ANXA7 and TSG101. Interacts with DAPK1. Interacts with SEC31A; the interaction is calcium-dependent and promotes monoubiquitination of SEC31A. Interacts with ANXA11 (via N-terminus); the interaction is calcium-dependent. Interacts with PLSCR3 (via N-terminus); the interaction is calcium-dependent. Interacts with MCOLN1; the interaction is calcium-dependent. Interacts with KDR; the interaction is calcium-dependent. Interacts with HEBP2; the interaction is calcium-dependent. Interacts with TFG. Isoform 1: Interacts with SHISA5, leading to stabilize it. Isoform 2: Does not interact with SHISA5. Isoform 2: Does not interact with PDCD6IP, TSG101, ANXA7 and ANXA11.

The protein localises to the endoplasmic reticulum membrane. Its subcellular location is the cytoplasmic vesicle. It is found in the COPII-coated vesicle membrane. It localises to the cytoplasm. The protein resides in the nucleus. The protein localises to the endosome. In terms of biological role, calcium sensor that plays a key role in processes such as endoplasmic reticulum (ER)-Golgi vesicular transport, endosomal biogenesis or membrane repair. Acts as an adapter that bridges unrelated proteins or stabilizes weak protein-protein complexes in response to calcium: calcium-binding triggers exposure of apolar surface, promoting interaction with different sets of proteins thanks to 3 different hydrophobic pockets, leading to translocation to membranes. Involved in ER-Golgi transport. Regulates ER-Golgi transport by promoting the association between PDCD6IP and TSG101, thereby bridging together the ESCRT-III and ESCRT-I complexes. Together with PEF1, acts as a calcium-dependent adapter for the BCR(KLHL12) complex, a complex involved in ER-Golgi transport by regulating the size of COPII coats. In response to cytosolic calcium increase, the heterodimer formed with PEF1 interacts with, and bridges together the BCR(KLHL12) complex and SEC31 (SEC31A or SEC31B), promoting monoubiquitination of SEC31 and subsequent collagen export, which is required for neural crest specification. Involved in the regulation of the distribution and function of MCOLN1 in the endosomal pathway. Promotes localization and polymerization of TFG at endoplasmic reticulum exit site. Required for T-cell receptor-, Fas-, and glucocorticoid-induced apoptosis. May mediate Ca(2+)-regulated signals along the death pathway: interaction with DAPK1 can accelerate apoptotic cell death by increasing caspase-3 activity. Its role in apoptosis may however be indirect, as suggested by knockout experiments. May inhibit KDR/VEGFR2-dependent angiogenesis; the function involves inhibition of VEGF-induced phosphorylation of the Akt signaling pathway. Its function is as follows. Has a lower Ca(2+) affinity than isoform 1. This is Programmed cell death protein 6 from Rattus norvegicus (Rat).